The sequence spans 189 residues: Crossover junction endodeoxyribonuclease RuvC (189 aa).

Catalysis depends on residues Asp11, Glu71, and Asp143. 3 residues coordinate Mg(2+): Asp11, Glu71, and Asp143.

The protein belongs to the RuvC family. In terms of assembly, homodimer which binds Holliday junction (HJ) DNA. The HJ becomes 2-fold symmetrical on binding to RuvC with unstacked arms; it has a different conformation from HJ DNA in complex with RuvA. In the full resolvosome a probable DNA-RuvA(4)-RuvB(12)-RuvC(2) complex forms which resolves the HJ. Requires Mg(2+) as cofactor.

The protein localises to the cytoplasm. The catalysed reaction is Endonucleolytic cleavage at a junction such as a reciprocal single-stranded crossover between two homologous DNA duplexes (Holliday junction).. Its function is as follows. The RuvA-RuvB-RuvC complex processes Holliday junction (HJ) DNA during genetic recombination and DNA repair. Endonuclease that resolves HJ intermediates. Cleaves cruciform DNA by making single-stranded nicks across the HJ at symmetrical positions within the homologous arms, yielding a 5'-phosphate and a 3'-hydroxyl group; requires a central core of homology in the junction. The consensus cleavage sequence is 5'-(A/T)TT(C/G)-3'. Cleavage occurs on the 3'-side of the TT dinucleotide at the point of strand exchange. HJ branch migration catalyzed by RuvA-RuvB allows RuvC to scan DNA until it finds its consensus sequence, where it cleaves and resolves the cruciform DNA. The sequence is that of Crossover junction endodeoxyribonuclease RuvC from Methylorubrum extorquens (strain CM4 / NCIMB 13688) (Methylobacterium extorquens).